Consider the following 227-residue polypeptide: Ion-translocating oxidoreductase complex subunit E (227 aa).

Transmembrane regions (helical) follow at residues 34 to 56 (AINAIGLGMTTTLVLTITNTIIS), 68 to 88 (IPIYMMIISSVVTSIEMLLHA), 91 to 111 (FNLYQSLGIFIPLIVTNCIIV), 127 to 147 (FFDGIFIGLGSMFAMFAVGSI), and 181 to 201 (TIILAVFPPGGFLILGFLIAI).

Belongs to the NqrDE/RnfAE family. In terms of assembly, the complex is composed of six subunits: RnfA, RnfB, RnfC, RnfD, RnfE and RnfG.

The protein localises to the cell inner membrane. Its function is as follows. Part of a membrane-bound complex that couples electron transfer with translocation of ions across the membrane. In Buchnera aphidicola subsp. Acyrthosiphon pisum (strain APS) (Acyrthosiphon pisum symbiotic bacterium), this protein is Ion-translocating oxidoreductase complex subunit E.